Reading from the N-terminus, the 339-residue chain is MO25-like protein 3 (339 aa).

This sequence belongs to the Mo25 family.

This Caenorhabditis elegans protein is MO25-like protein 3 (mop-25.3).